A 230-amino-acid polypeptide reads, in one-letter code: GTP cyclohydrolase III (230 aa).

This sequence belongs to the archaeal-type GTP cyclohydrolase family.

It catalyses the reaction GTP + 3 H2O = 2-amino-5-formylamino-6-(5-phospho-D-ribosylamino)pyrimidin-4(3H)-one + 2 phosphate + 2 H(+). Its function is as follows. Catalyzes the formation of 2-amino-5-formylamino-6-ribofuranosylamino-4(3H)-pyrimidinone ribonucleotide monophosphate and inorganic phosphate from GTP. Also has an independent pyrophosphate phosphohydrolase activity. The polypeptide is GTP cyclohydrolase III (Saccharolobus islandicus (strain M.16.27) (Sulfolobus islandicus)).